The chain runs to 320 residues: Aminoacyl tRNA synthase complex-interacting multifunctional protein 2 (320 aa).

The disordered stretch occupies residues 31-51; it reads HSKTTSPATDAGHVQEPSEPS. The residue at position 36 (serine 36) is a Phosphoserine. Residues 82–162 form an interaction with PRKN region; sequence TPDADLDVTN…HTHSSVKNVP (81 aa). The interval 162–225 is interaction with TP53; it reads PENLLKCFGE…FLFSLFGQKH (64 aa). The region spanning 220–317 is the GST C-terminal domain; the sequence is LFGQKHNAVH…NLAPFSTALQ (98 aa).

As to quaternary structure, part of the multisynthetase complex (MSC), a multisubunit complex that groups tRNA ligases for Arg (RARS1), Asp (DARS1), Gln (QARS1), Ile (IARS1), Leu (LARS1), Lys (KARS1), Met (MARS1) the bifunctional ligase for Glu and Pro (EPRS1) and the auxiliary subunits AIMP1/p43, AIMP2/p38 and EEF1E1/p18. Interacts (via N-terminus) with KARS1. Interacts with EPRS1. Forms a linear complex that contains MARS1, EEF1E1, EPRS1 and AIMP2 that is at the core of the multisubunit complex. Binds FUBP1 (via C-terminus). Interacts in both its unphosphorylated and phosphorylated forms with p53/TP53 (via N-terminus) in the nucleus following UV irradiation. Interacts (via N-terminus) with PRKN/parkin (via first RING-type domain). Interacts with TARS3. Phosphorylated on serine residues in response to UV irradiation. Post-translationally, ubiquitinated by PRKN, leading to its degradation by the proteasome.

It localises to the cytoplasm. The protein localises to the cytosol. The protein resides in the nucleus. Functionally, required for assembly and stability of the aminoacyl-tRNA synthase complex. Mediates ubiquitination and degradation of FUBP1, a transcriptional activator of MYC, leading to MYC down-regulation which is required for aveolar type II cell differentiation. Blocks MDM2-mediated ubiquitination and degradation of p53/TP53. Functions as a proapoptotic factor. In Rattus norvegicus (Rat), this protein is Aminoacyl tRNA synthase complex-interacting multifunctional protein 2 (Aimp2).